Consider the following 79-residue polypeptide: Neurotoxin BmK-M9 (79 aa).

A signal peptide spans 1–14 (MISFALLLMTGVES). The LCN-type CS-alpha/beta domain maps to 16 to 78 (RDAYIAKPEN…VPIRVPGKCH (63 aa)). 4 disulfides stabilise this stretch: C26/C77, C30/C50, C36/C60, and C40/C62. A propeptide (removed by a carboxypeptidase) is located at residue R79.

It belongs to the long (4 C-C) scorpion toxin superfamily. Sodium channel inhibitor family. Alpha subfamily. Expressed by the venom gland.

It localises to the secreted. In terms of biological role, binds to sodium channels (Nav) and inhibits the inactivation of the activated channels, thereby blocking neuronal transmission. This toxin is active against mammals. The sequence is that of Neurotoxin BmK-M9 from Olivierus martensii (Manchurian scorpion).